Reading from the N-terminus, the 175-residue chain is Alkyl hydroperoxide reductase AhpD (175 aa).

C131 acts as the Proton donor in catalysis. Residues C131 and C134 are joined by a disulfide bond. C134 serves as the catalytic Cysteine sulfenic acid (-SOH) intermediate.

The protein belongs to the AhpD family.

It carries out the reaction N(6)-[(R)-dihydrolipoyl]-L-lysyl-[lipoyl-carrier protein] + a hydroperoxide = N(6)-[(R)-lipoyl]-L-lysyl-[lipoyl-carrier protein] + an alcohol + H2O. Functionally, antioxidant protein with alkyl hydroperoxidase activity. Required for the reduction of the AhpC active site cysteine residues and for the regeneration of the AhpC enzyme activity. In Brucella melitensis biotype 1 (strain ATCC 23456 / CCUG 17765 / NCTC 10094 / 16M), this protein is Alkyl hydroperoxide reductase AhpD.